Here is a 260-residue protein sequence, read N- to C-terminus: GTP cyclohydrolase FolE2 (260 aa).

Belongs to the GTP cyclohydrolase IV family.

It catalyses the reaction GTP + H2O = 7,8-dihydroneopterin 3'-triphosphate + formate + H(+). The protein operates within cofactor biosynthesis; 7,8-dihydroneopterin triphosphate biosynthesis; 7,8-dihydroneopterin triphosphate from GTP: step 1/1. Converts GTP to 7,8-dihydroneopterin triphosphate. This is GTP cyclohydrolase FolE2 from Desulfovibrio desulfuricans (strain ATCC 27774 / DSM 6949 / MB).